The following is a 178-amino-acid chain: Large ribosomal subunit protein uL10 (178 aa).

The protein belongs to the universal ribosomal protein uL10 family. Part of the ribosomal stalk of the 50S ribosomal subunit. The N-terminus interacts with L11 and the large rRNA to form the base of the stalk. The C-terminus forms an elongated spine to which L12 dimers bind in a sequential fashion forming a multimeric L10(L12)X complex.

Functionally, forms part of the ribosomal stalk, playing a central role in the interaction of the ribosome with GTP-bound translation factors. The sequence is that of Large ribosomal subunit protein uL10 from Gloeothece citriformis (strain PCC 7424) (Cyanothece sp. (strain PCC 7424)).